The following is a 355-amino-acid chain: uncharacterized protein (355 aa).

Catalysis depends on Cys2, which acts as the For GATase activity. One can recognise a Glutamine amidotransferase type-2 domain in the interval 2–248; the sequence is CELLGICFNK…NGELMVFKNG (247 aa).

This is an uncharacterized protein from Methanocaldococcus jannaschii (strain ATCC 43067 / DSM 2661 / JAL-1 / JCM 10045 / NBRC 100440) (Methanococcus jannaschii).